A 33-amino-acid polypeptide reads, in one-letter code: Dermonecrotic toxin LbSicTox-alphaIB1b (33 aa).

The active site involves His-11. Mg(2+)-binding residues include Glu-31 and Asp-33.

This sequence belongs to the arthropod phospholipase D family. Class II subfamily. Mg(2+) serves as cofactor. Post-translationally, contains 2 disulfide bonds. Expressed by the venom gland.

The protein resides in the secreted. The catalysed reaction is an N-(acyl)-sphingosylphosphocholine = an N-(acyl)-sphingosyl-1,3-cyclic phosphate + choline. The enzyme catalyses an N-(acyl)-sphingosylphosphoethanolamine = an N-(acyl)-sphingosyl-1,3-cyclic phosphate + ethanolamine. It carries out the reaction a 1-acyl-sn-glycero-3-phosphocholine = a 1-acyl-sn-glycero-2,3-cyclic phosphate + choline. It catalyses the reaction a 1-acyl-sn-glycero-3-phosphoethanolamine = a 1-acyl-sn-glycero-2,3-cyclic phosphate + ethanolamine. Functionally, dermonecrotic toxins cleave the phosphodiester linkage between the phosphate and headgroup of certain phospholipids (sphingolipid and lysolipid substrates), forming an alcohol (often choline) and a cyclic phosphate. This toxin acts on sphingomyelin (SM) with high activity (9.5 U/mg). It may also act on ceramide phosphoethanolamine (CPE), lysophosphatidylcholine (LPC) and lysophosphatidylethanolamine (LPE), but not on lysophosphatidylserine (LPS), and lysophosphatidylglycerol (LPG). It acts by transphosphatidylation, releasing exclusively cyclic phosphate products as second products. Induces dermonecrosis, hemolysis, increased vascular permeability, edema, inflammatory response, and platelet aggregation. In Loxosceles boneti (North American fiddleback spider), this protein is Dermonecrotic toxin LbSicTox-alphaIB1b.